A 95-amino-acid polypeptide reads, in one-letter code: Protein RL5A (95 aa).

This is Protein RL5A (RL5A) from Homo sapiens (Human).